The chain runs to 226 residues: uncharacterized protein (226 aa).

Positions 4 to 226 (LQFQQVGYWY…FTVKENVAVV (223 aa)) constitute an ABC transporter domain. 38 to 45 (GTSGTGKT) contributes to the ATP binding site.

This sequence belongs to the ABC transporter superfamily.

This is an uncharacterized protein from Bacillus subtilis (strain 168).